The primary structure comprises 190 residues: MIRFEIHGDNLTITDAIRNYIEEKIGKLERYFNDVPNAVAHVKVKTYSNSATKIEVTIPLKNVTLRAEERNDDLYAGIDLINNKLERQVRKYKTRINRKSRDRGDQEVFVAELQEMQETQVDNDAYDDNEIEIIRSKEFSLKPMDSEEAVLQMNLLGHDFFVFTDRETDGTSIVYRRKDGKYGLIQTSEQ.

The interval Arg-101–Gln-190 is required for ribosome-binding.

This sequence belongs to the HPF/YfiA ribosome-associated protein family. Long HPF subfamily. Interacts with 100S ribosomes during exponential growth, as 100S ribosomes decrease (after 28 hours) also found associated with 30s and 50S subunits.

It localises to the cytoplasm. In terms of biological role, required and sufficient for dimerization of active 70S ribosomes into 100S ribosomes. 110S ribosomes are probably translationally inactive and may serve as a reservoir of easily reactivated ribosomes when necessary in the cell. Also reduces the translation efficiency of a small number of genes. Unlike E.coli, 100S ribosomes are present during exponential growth and decrease during stationary phase. This strain produces 30% fewer 100S ribosomes than strain N315 and RN4200 under the same growth conditions. The chain is Ribosome hibernation promotion factor from Staphylococcus aureus (strain USA300).